The primary structure comprises 295 residues: Shikimate dehydrogenase (NADP(+)) (295 aa).

Shikimate is bound by residues serine 20–serine 22 and threonine 68. The active-site Proton acceptor is lysine 72. Residues asparagine 93 and aspartate 108 each contribute to the shikimate site. NADP(+)-binding positions include glycine 132–alanine 136 and methionine 234. Tyrosine 236 provides a ligand contact to shikimate. Glycine 257 contacts NADP(+).

The protein belongs to the shikimate dehydrogenase family. As to quaternary structure, homodimer.

It carries out the reaction shikimate + NADP(+) = 3-dehydroshikimate + NADPH + H(+). The protein operates within metabolic intermediate biosynthesis; chorismate biosynthesis; chorismate from D-erythrose 4-phosphate and phosphoenolpyruvate: step 4/7. Its function is as follows. Involved in the biosynthesis of the chorismate, which leads to the biosynthesis of aromatic amino acids. Catalyzes the reversible NADPH linked reduction of 3-dehydroshikimate (DHSA) to yield shikimate (SA). This Chlorobaculum tepidum (strain ATCC 49652 / DSM 12025 / NBRC 103806 / TLS) (Chlorobium tepidum) protein is Shikimate dehydrogenase (NADP(+)).